The following is a 115-amino-acid chain: Nucleoid-associated protein alr5067 (115 aa).

It belongs to the YbaB/EbfC family. As to quaternary structure, homodimer.

It is found in the cytoplasm. Its subcellular location is the nucleoid. Its function is as follows. Binds to DNA and alters its conformation. May be involved in regulation of gene expression, nucleoid organization and DNA protection. The polypeptide is Nucleoid-associated protein alr5067 (Nostoc sp. (strain PCC 7120 / SAG 25.82 / UTEX 2576)).